The primary structure comprises 40 residues: Natriuretic peptide PpNP-a (40 aa).

The propeptide occupies 1 to 8 (SGSKTANI). Residues 1–40 (SGSKTANIGDGCFGVPIDHIGSTSGMGCGSPRPKPTPGGS) are disordered. C12 and C28 are disulfide-bonded.

It belongs to the natriuretic peptide family. As to expression, expressed by the venom gland.

Its subcellular location is the secreted. Snake venom natriuretic peptide that targets both NPR1 and NPR2. Exhibits hypotensive and vasodepressor activities. This Pseudechis porphyriacus (Red-bellied black snake) protein is Natriuretic peptide PpNP-a.